We begin with the raw amino-acid sequence, 111 residues long: Large ribosomal subunit protein uL23 (111 aa).

This sequence belongs to the universal ribosomal protein uL23 family. As to quaternary structure, part of the 50S ribosomal subunit. Contacts protein L29, and trigger factor when it is bound to the ribosome.

Functionally, one of the early assembly proteins it binds 23S rRNA. One of the proteins that surrounds the polypeptide exit tunnel on the outside of the ribosome. Forms the main docking site for trigger factor binding to the ribosome. The protein is Large ribosomal subunit protein uL23 of Nitrosomonas europaea (strain ATCC 19718 / CIP 103999 / KCTC 2705 / NBRC 14298).